We begin with the raw amino-acid sequence, 132 residues long: Ribosome-binding factor A (132 aa).

The segment at 113–132 is disordered; the sequence is EANSTRAKDDDEADTPAKDD.

It belongs to the RbfA family. Monomer. Binds 30S ribosomal subunits, but not 50S ribosomal subunits or 70S ribosomes.

It is found in the cytoplasm. Its function is as follows. One of several proteins that assist in the late maturation steps of the functional core of the 30S ribosomal subunit. Associates with free 30S ribosomal subunits (but not with 30S subunits that are part of 70S ribosomes or polysomes). Required for efficient processing of 16S rRNA. May interact with the 5'-terminal helix region of 16S rRNA. The sequence is that of Ribosome-binding factor A from Burkholderia cenocepacia (strain HI2424).